We begin with the raw amino-acid sequence, 179 residues long: NADH-quinone oxidoreductase subunit I (179 aa).

4Fe-4S ferredoxin-type domains lie at 49–79 (LTRDPDGEERCVACNLCAVACPVACISLQKG) and 89–118 (EFFRINFSRCIFCGLCEEACPTSAIQLTPD). 8 residues coordinate [4Fe-4S] cluster: C59, C62, C65, C69, C98, C101, C104, and C108.

Belongs to the complex I 23 kDa subunit family. In terms of assembly, NDH-1 is composed of 14 different subunits. Subunits NuoA, H, J, K, L, M, N constitute the membrane sector of the complex. Requires [4Fe-4S] cluster as cofactor.

The protein resides in the cell inner membrane. It carries out the reaction a quinone + NADH + 5 H(+)(in) = a quinol + NAD(+) + 4 H(+)(out). Functionally, NDH-1 shuttles electrons from NADH, via FMN and iron-sulfur (Fe-S) centers, to quinones in the respiratory chain. The immediate electron acceptor for the enzyme in this species is believed to be ubiquinone. Couples the redox reaction to proton translocation (for every two electrons transferred, four hydrogen ions are translocated across the cytoplasmic membrane), and thus conserves the redox energy in a proton gradient. In Chromohalobacter salexigens (strain ATCC BAA-138 / DSM 3043 / CIP 106854 / NCIMB 13768 / 1H11), this protein is NADH-quinone oxidoreductase subunit I.